Consider the following 298-residue polypeptide: Ethanolamine ammonia-lyase small subunit (298 aa).

The interval 15-43 (ASMGQDVPQPVAPSTQEGAKPQRAAPTAT) is disordered. The adenosylcob(III)alamin site is built by Val210, Glu231, and Cys261.

This sequence belongs to the EutC family. As to quaternary structure, the basic unit is a heterodimer which dimerizes to form tetramers. The heterotetramers trimerize; 6 large subunits form a core ring with 6 small subunits projecting outwards. Adenosylcob(III)alamin is required as a cofactor.

The protein resides in the bacterial microcompartment. It carries out the reaction ethanolamine = acetaldehyde + NH4(+). It participates in amine and polyamine degradation; ethanolamine degradation. Catalyzes the deamination of various vicinal amino-alcohols to oxo compounds. Allows this organism to utilize ethanolamine as the sole source of nitrogen and carbon in the presence of external vitamin B12. The chain is Ethanolamine ammonia-lyase small subunit from Salmonella arizonae (strain ATCC BAA-731 / CDC346-86 / RSK2980).